The chain runs to 525 residues: MNFILTDFAARLELVARNPEVFKQFGRGVERETLRYSQNGRIATTMHPQGLGSAFTNQWITTDFAESLLEFITPVSHDIDVLLGQLDDIHHFTQTQLGEEKMWPMSMPCYVETEDQITLAQYGSSNSAKMKTLYREGLKRRYGSLMQIISGVHFNFSFPESFWDALHGEQTEDERQATKSEAYFGLIRNYYRFGWLIPYFFGASPAMCSSFLQGRETSLPFEALGKTLYLPKATSLRLSDLGYTNSAQSVLTIGFNSIDEYLEGLTKAIRTPSAEFAKLGVKENGEYRQLNSNVLQIENELYAPIRPKRVAKNGEKPSEALARGGVEYIEVRSLDVNPFTPVGITETQVRFLDLFLTWAALSESQPMDQCELACWRENWNKVVVSGREYGLELQIGCKGEKLSLQAWAHRVFAELRQLAEVMDSAHGDNQYSLACSELEQWIDHPEKTLSAQLLTLIQQNGSLGATGCELGGAYREQNLAHHYRHFSLQQMEQEVALSLIKQSQIEQADEVDFDTYLADYFAYLK.

The protein belongs to the glutamate--cysteine ligase type 1 family. Type 1 subfamily.

The enzyme catalyses L-cysteine + L-glutamate + ATP = gamma-L-glutamyl-L-cysteine + ADP + phosphate + H(+). Its pathway is sulfur metabolism; glutathione biosynthesis; glutathione from L-cysteine and L-glutamate: step 1/2. This Vibrio vulnificus (strain CMCP6) protein is Glutamate--cysteine ligase.